Here is a 303-residue protein sequence, read N- to C-terminus: Quinolinate synthase (303 aa).

Residues H24 and S41 each coordinate iminosuccinate. C86 is a binding site for [4Fe-4S] cluster. Iminosuccinate contacts are provided by residues 112-114 (YIN) and S129. C172 lines the [4Fe-4S] cluster pocket. Residues 198–200 (HPE) and T215 each bind iminosuccinate. C260 is a [4Fe-4S] cluster binding site.

Belongs to the quinolinate synthase family. Type 2 subfamily. [4Fe-4S] cluster is required as a cofactor.

It localises to the cytoplasm. It catalyses the reaction iminosuccinate + dihydroxyacetone phosphate = quinolinate + phosphate + 2 H2O + H(+). It participates in cofactor biosynthesis; NAD(+) biosynthesis; quinolinate from iminoaspartate: step 1/1. Functionally, catalyzes the condensation of iminoaspartate with dihydroxyacetone phosphate to form quinolinate. In Caldicellulosiruptor bescii (strain ATCC BAA-1888 / DSM 6725 / KCTC 15123 / Z-1320) (Anaerocellum thermophilum), this protein is Quinolinate synthase.